A 528-amino-acid chain; its full sequence is MLGRTLQEVSAALKQGQITPTELCQKCLSLIKKTKFLNAYITVSEEVALKQAEESEKRYKNGQSLGDLDGIPVAVKDNFSTSGIETTCASNMLKGYIPPYNATVVQKLLDQGALLMGKTNLDEFAMGSGSTDGIFGPVKNPWSYSKQYREKRKQNPHSKNEDSDWLITGGSSGGSAAAVSAFTCYAALGSDTGGSTRNPAAHCGLVGFKPSYGLVSRHGLIPLVNSMDVPGILTRCVDDAAIVLGALAGPDPKDSTTVHDPINKPFMLPSLADVSKLCIGIPKEYLIPELSSEVRSLWSKAADLFESEGAKVLEVSLPHTSYSIVCYHVLCTSEVASNMARFDGLQYGHRCDINVSTEAMYAATRREGFNDVVRGRILSGNFFLLKENYENYFVKAQKVRRLIANDFVNAFNSGVDVLLTPTTLSEAVPYLEFIKEDNRTRSAQDDIFTQAVNMAGLPAVSIPVALSNQGLPIGLQFIGRAFCDQQLLTVAKWFEKQVQFPFIQLQELMDDCSAVLENEKSASVSLKQ.

Lys-76 (charge relay system) is an active-site residue. Residues 147 to 166 (QYREKRKQNPHSKNEDSDWL) are disordered. Catalysis depends on Ser-171, which acts as the Charge relay system. The active-site Acyl-ester intermediate is Ser-195.

This sequence belongs to the amidase family. GatA subfamily. In terms of assembly, subunit of the heterotrimeric GatCAB amidotransferase (AdT) complex, composed of A (QRSL1), B (GATB) and C (GATC) subunits.

The protein localises to the mitochondrion. It catalyses the reaction L-glutamyl-tRNA(Gln) + L-glutamine + ATP + H2O = L-glutaminyl-tRNA(Gln) + L-glutamate + ADP + phosphate + H(+). Functionally, allows the formation of correctly charged Gln-tRNA(Gln) through the transamidation of misacylated Glu-tRNA(Gln) in the mitochondria. The reaction takes place in the presence of glutamine and ATP through an activated gamma-phospho-Glu-tRNA(Gln). In Macaca fascicularis (Crab-eating macaque), this protein is Glutamyl-tRNA(Gln) amidotransferase subunit A, mitochondrial.